The chain runs to 133 residues: ATP synthase epsilon chain (133 aa).

This sequence belongs to the ATPase epsilon chain family. F-type ATPases have 2 components, CF(1) - the catalytic core - and CF(0) - the membrane proton channel. CF(1) has five subunits: alpha(3), beta(3), gamma(1), delta(1), epsilon(1). CF(0) has three main subunits: a, b and c.

It is found in the cell membrane. Functionally, produces ATP from ADP in the presence of a proton gradient across the membrane. The sequence is that of ATP synthase epsilon chain from Clostridium perfringens (strain ATCC 13124 / DSM 756 / JCM 1290 / NCIMB 6125 / NCTC 8237 / Type A).